Reading from the N-terminus, the 555-residue chain is Membrane protein insertase YidC (555 aa).

A helical membrane pass occupies residues 7–24 (ILWVIFSMSLVLLYDNWQ). Residues 62–81 (APGAAGTAAPAAPQAAAQPT) are disordered. 5 helical membrane passes run 334 to 354 (LELV…FWLL), 360 to 380 (FLGN…LVFF), 430 to 450 (LGGC…YWVL), 468 to 488 (LSVP…MFVQ), and 503 to 523 (VMMI…AGLV).

This sequence belongs to the OXA1/ALB3/YidC family. Type 1 subfamily. Interacts with the Sec translocase complex via SecD. Specifically interacts with transmembrane segments of nascent integral membrane proteins during membrane integration.

It localises to the cell inner membrane. Its function is as follows. Required for the insertion and/or proper folding and/or complex formation of integral membrane proteins into the membrane. Involved in integration of membrane proteins that insert both dependently and independently of the Sec translocase complex, as well as at least some lipoproteins. Aids folding of multispanning membrane proteins. This chain is Membrane protein insertase YidC, found in Cupriavidus necator (strain ATCC 17699 / DSM 428 / KCTC 22496 / NCIMB 10442 / H16 / Stanier 337) (Ralstonia eutropha).